The sequence spans 566 residues: 4-hydroxy-7-methoxy-3-oxo-3,4-dihydro-2H-1,4-benzoxazin-2-yl glucoside beta-D-glucosidase 1, chloroplastic (566 aa).

The N-terminal 54 residues, 1–54, are a transit peptide targeting the chloroplast; that stretch reads MAPLLAAAMNHAAAHPGLRSHLVGPNNESFSRHHLPSSSPQSSKRRCNLSFTTR. The interval 17–47 is disordered; the sequence is GLRSHLVGPNNESFSRHHLPSSSPQSSKRRC. A beta-D-glucoside contacts are provided by residues glutamine 92, histidine 196, and 244-245; that span reads NE. The active-site Proton donor is glutamate 245. Cysteine 264 and cysteine 270 are oxidised to a cystine. The tract at residues 325 to 361 is dimerization; the sequence is SFLDKQAEERSWDINLGWFLEPVVRGDYPFSMRSLAR. Residue tyrosine 387 participates in a beta-D-glucoside binding. Dimerization regions lie at residues 394–405 and 450–453; these read NIDISPNYSPVL and KYGN. Residues glutamate 460, tryptophan 511, 518–519, and tyrosine 527 each bind a beta-D-glucoside; that span reads EW. Glutamate 460 (nucleophile) is an active-site residue.

Belongs to the glycosyl hydrolase 1 family. As to quaternary structure, homo- and heterodimer. In terms of tissue distribution, expressed in all seedling parts. Most abundant in the coleoptile.

The protein resides in the plastid. It localises to the chloroplast. The enzyme catalyses Hydrolysis of terminal, non-reducing beta-D-glucosyl residues with release of beta-D-glucose.. The catalysed reaction is DIMBOA beta-D-glucoside + H2O = DIMBOA + D-glucose. It carries out the reaction DIBOA beta-D-glucoside + H2O = DIBOA + D-glucose. Its activity is regulated as follows. Reversibly inhibited by micromolar concentrations of Hg(2+) or Ag(+), but irreversibly inhibited by alkylation in presence of urea. Competitive inhibition by p-nitrophenyl beta-D-thioglucoside (pNPTGlc), glucotetrazole, and para-hydroxy-S-mandelonitrile beta-glucoside (dhurrin). Is implicated in many functions such as ABA metabolism, hydrolysis of conjugated gibberellins, conversion of storage forms of cytokinins to active forms. Also acts in defense of young plant parts against pests via the production of hydroxamic acids from hydroxamic acid glucosides. Enzymatic activity is highly correlated with plant growth. The preferred substrate is DIMBOA-beta-D-glucoside. Hydrolyzes the chromogenic substrate 6-bromo-2-naphthyl-beta-D-glucoside (6BNGlc) and various artificial aryl beta-glucosides. No activity with cellobiose, arbutin, gentiobiose, linamarin or dhurrin as substrates. In Zea mays (Maize), this protein is 4-hydroxy-7-methoxy-3-oxo-3,4-dihydro-2H-1,4-benzoxazin-2-yl glucoside beta-D-glucosidase 1, chloroplastic (GLU1).